A 1326-amino-acid chain; its full sequence is Putative late blight resistance protein homolog R1B-19 (1326 aa).

Coiled coils occupy residues 421–444 (RYSD…ESLQ) and 536–558 (PRMK…KLLN). 570-577 (GMPGLGKT) is a binding site for ATP. The NB-ARC domain occupies 611–864 (LLSLLCDTIG…KVKTCRLHDV (254 aa)). Residues 749–770 (SEMEKEVECWEQVANNLGTRIH) adopt a coiled-coil conformation. 9 LRR repeats span residues 953-978 (FKFL…VYLK), 980-996 (FSAH…IYNL), 1027-1050 (LRHL…SAKL), 1053-1070 (LETL…LNFP), 1071-1094 (IRLE…ISAP), 1098-1118 (YLKL…ADHL), 1119-1146 (KNLE…MFPQ), 1167-1191 (FPNL…AMNI), and 1208-1230 (LIEK…AFKR). Residues 1209–1278 (IEKKTLKLNL…AWHARVVVPT (70 aa)) enclose the HMA domain.

This sequence belongs to the disease resistance NB-LRR family.

The protein resides in the cytoplasm. Its subcellular location is the membrane. In terms of biological role, confers resistance to late blight (Phytophthora infestans) races carrying the avirulence gene Avr1. Resistance proteins guard the plant against pathogens that contain an appropriate avirulence protein via an indirect interaction with this avirulence protein. That triggers a defense system including the hypersensitive response, which restricts the pathogen growth. This Solanum demissum (Wild potato) protein is Putative late blight resistance protein homolog R1B-19 (R1B-19).